Consider the following 54-residue polypeptide: Large ribosomal subunit protein bL32c (54 aa).

Belongs to the bacterial ribosomal protein bL32 family.

It is found in the plastid. It localises to the chloroplast. The protein is Large ribosomal subunit protein bL32c of Piper cenocladum (Ant piper).